A 142-amino-acid polypeptide reads, in one-letter code: Large ribosomal subunit protein uL13 (142 aa).

This sequence belongs to the universal ribosomal protein uL13 family. Part of the 50S ribosomal subunit.

Its function is as follows. This protein is one of the early assembly proteins of the 50S ribosomal subunit, although it is not seen to bind rRNA by itself. It is important during the early stages of 50S assembly. This Delftia acidovorans (strain DSM 14801 / SPH-1) protein is Large ribosomal subunit protein uL13.